The following is a 408-amino-acid chain: Imidazolonepropionase (408 aa).

Positions 73 and 75 each coordinate Fe(3+). His-73 and His-75 together coordinate Zn(2+). Positions 82, 145, and 178 each coordinate 4-imidazolone-5-propanoate. Tyr-145 is a binding site for N-formimidoyl-L-glutamate. His-243 is a Fe(3+) binding site. His-243 contacts Zn(2+). Gln-246 provides a ligand contact to 4-imidazolone-5-propanoate. Asp-318 is a Fe(3+) binding site. Asp-318 serves as a coordination point for Zn(2+). Residues Asn-320 and Gly-322 each contribute to the N-formimidoyl-L-glutamate site. Position 323 (Ser-323) interacts with 4-imidazolone-5-propanoate.

It belongs to the metallo-dependent hydrolases superfamily. HutI family. Zn(2+) serves as cofactor. Fe(3+) is required as a cofactor.

Its subcellular location is the cytoplasm. It catalyses the reaction 4-imidazolone-5-propanoate + H2O = N-formimidoyl-L-glutamate. Its pathway is amino-acid degradation; L-histidine degradation into L-glutamate; N-formimidoyl-L-glutamate from L-histidine: step 3/3. In terms of biological role, catalyzes the hydrolytic cleavage of the carbon-nitrogen bond in imidazolone-5-propanoate to yield N-formimidoyl-L-glutamate. It is the third step in the universal histidine degradation pathway. This chain is Imidazolonepropionase, found in Shewanella halifaxensis (strain HAW-EB4).